The following is a 39-amino-acid chain: Photosystem II reaction center protein L (39 aa).

The helical transmembrane segment at 18–38 (SLYLGLLLVFVLGILFSSYFF) threads the bilayer.

The protein belongs to the PsbL family. As to quaternary structure, PSII is composed of 1 copy each of membrane proteins PsbA, PsbB, PsbC, PsbD, PsbE, PsbF, PsbH, PsbI, PsbJ, PsbK, PsbL, PsbM, PsbT, PsbX, PsbY, Psb30/Ycf12, peripheral proteins PsbO, CyanoQ (PsbQ), PsbU, PsbV and a large number of cofactors. It forms dimeric complexes.

It is found in the cellular thylakoid membrane. One of the components of the core complex of photosystem II (PSII). PSII is a light-driven water:plastoquinone oxidoreductase that uses light energy to abstract electrons from H(2)O, generating O(2) and a proton gradient subsequently used for ATP formation. It consists of a core antenna complex that captures photons, and an electron transfer chain that converts photonic excitation into a charge separation. This subunit is found at the monomer-monomer interface and is required for correct PSII assembly and/or dimerization. The chain is Photosystem II reaction center protein L from Prochlorococcus marinus (strain SARG / CCMP1375 / SS120).